The sequence spans 71 residues: Large ribosomal subunit protein bL31 (71 aa).

The Zn(2+) site is built by Cys16, Cys18, Cys37, and Cys40.

This sequence belongs to the bacterial ribosomal protein bL31 family. Type A subfamily. In terms of assembly, part of the 50S ribosomal subunit. Zn(2+) is required as a cofactor.

Its function is as follows. Binds the 23S rRNA. The sequence is that of Large ribosomal subunit protein bL31 from Actinobacillus succinogenes (strain ATCC 55618 / DSM 22257 / CCUG 43843 / 130Z).